The following is a 269-amino-acid chain: 4-hydroxy-4-methyl-2-oxoglutarate aldolase cghB (269 aa).

H48 acts as the Proton acceptor in catalysis. Positions 155 and 181 each coordinate a divalent metal cation. Residue D181 participates in substrate binding.

It belongs to the HpcH/HpaI aldolase family. As to quaternary structure, homohexamer; trimer of dimers. Co(2+) serves as cofactor. Mn(2+) is required as a cofactor. The cofactor is Zn(2+). It depends on Fe(2+) as a cofactor. Requires Mg(2+) as cofactor.

It carries out the reaction 4-hydroxy-4-methyl-2-oxoglutarate = 2 pyruvate. Its pathway is secondary metabolite biosynthesis. Functionally, 4-hydroxy-4-methyl-2-oxoglutarate aldolase; part of the gene cluster that mediates the biosynthesis of the tetramic acid Sch210972, a potential anti-HIV fungal natural product that contains a decalin core. The PKS module of cghG together with the enoylreductase cghC catalyze the formation of the polyketide unit which is then conjugated to 4-hydroxyl-4-methyl glutamate (HMG) by the condensation domain of the cghG NRPS module. One unique structural feature of Sch210972 is the tetramic acid motif proposed to be derived from the non-proteinogenic amino acid HMG, by a Dieckmann-type condensation catalyzed by the reductase domain of cghG. The aldolase cghB catalyzes the aldol condensation of 2 molecules of pyruvic acid to yield the intermediate 4-hydroxyl-4-methyl-2-oxoglutarate (HMOG), which can then be stereoselectively transaminated by an unidentified enzyme to form HMG. The Diels-Alderase cghA then uses the Dieckmann product released by cghG as substrate and catalyzes the Diels-Alder cycloaddition to form the decalin ring of Sch210972. CghA also suppresses the nonenzymatic formation of the alternative stereoisomer. In Chaetomium globosum (strain ATCC 6205 / CBS 148.51 / DSM 1962 / NBRC 6347 / NRRL 1970) (Soil fungus), this protein is 4-hydroxy-4-methyl-2-oxoglutarate aldolase cghB.